The chain runs to 264 residues: Thiazole synthase (264 aa).

The Schiff-base intermediate with DXP role is filled by K106. Residues G167, 193-194, and 215-216 contribute to the 1-deoxy-D-xylulose 5-phosphate site; these read AG and NS.

It belongs to the ThiG family. Homotetramer. Forms heterodimers with either ThiH or ThiS.

Its subcellular location is the cytoplasm. It carries out the reaction [ThiS sulfur-carrier protein]-C-terminal-Gly-aminoethanethioate + 2-iminoacetate + 1-deoxy-D-xylulose 5-phosphate = [ThiS sulfur-carrier protein]-C-terminal Gly-Gly + 2-[(2R,5Z)-2-carboxy-4-methylthiazol-5(2H)-ylidene]ethyl phosphate + 2 H2O + H(+). The protein operates within cofactor biosynthesis; thiamine diphosphate biosynthesis. Its function is as follows. Catalyzes the rearrangement of 1-deoxy-D-xylulose 5-phosphate (DXP) to produce the thiazole phosphate moiety of thiamine. Sulfur is provided by the thiocarboxylate moiety of the carrier protein ThiS. In vitro, sulfur can be provided by H(2)S. The chain is Thiazole synthase from Prochlorococcus marinus (strain MIT 9215).